The sequence spans 266 residues: Ribosomal RNA small subunit methyltransferase A (266 aa).

Positions 16, 18, 43, 64, 89, and 110 each coordinate S-adenosyl-L-methionine.

Belongs to the class I-like SAM-binding methyltransferase superfamily. rRNA adenine N(6)-methyltransferase family. RsmA subfamily.

It localises to the cytoplasm. The enzyme catalyses adenosine(1518)/adenosine(1519) in 16S rRNA + 4 S-adenosyl-L-methionine = N(6)-dimethyladenosine(1518)/N(6)-dimethyladenosine(1519) in 16S rRNA + 4 S-adenosyl-L-homocysteine + 4 H(+). Functionally, specifically dimethylates two adjacent adenosines (A1518 and A1519) in the loop of a conserved hairpin near the 3'-end of 16S rRNA in the 30S particle. May play a critical role in biogenesis of 30S subunits. The sequence is that of Ribosomal RNA small subunit methyltransferase A from Marinomonas sp. (strain MWYL1).